We begin with the raw amino-acid sequence, 295 residues long: 4-diphosphocytidyl-2-C-methyl-D-erythritol kinase (295 aa).

Lys18 is an active-site residue. 101-111 (PMGGGIGGGSS) is an ATP binding site. Asp143 is an active-site residue.

The protein belongs to the GHMP kinase family. IspE subfamily.

It catalyses the reaction 4-CDP-2-C-methyl-D-erythritol + ATP = 4-CDP-2-C-methyl-D-erythritol 2-phosphate + ADP + H(+). It functions in the pathway isoprenoid biosynthesis; isopentenyl diphosphate biosynthesis via DXP pathway; isopentenyl diphosphate from 1-deoxy-D-xylulose 5-phosphate: step 3/6. Functionally, catalyzes the phosphorylation of the position 2 hydroxy group of 4-diphosphocytidyl-2C-methyl-D-erythritol. The chain is 4-diphosphocytidyl-2-C-methyl-D-erythritol kinase from Vibrio vulnificus (strain YJ016).